Reading from the N-terminus, the 357-residue chain is Sorbitol dehydrogenase 2 (357 aa).

C43 is a binding site for Zn(2+). Position 49 (Y49) interacts with substrate. 2 residues coordinate Zn(2+): H68 and E69. E154 is a substrate binding site. Residues D202, K207, 275-277 (VGM), and 299-301 (CFR) each bind NAD(+). R301 and Y302 together coordinate substrate.

The protein belongs to the zinc-containing alcohol dehydrogenase family. In terms of assembly, homotetramer. Zn(2+) serves as cofactor.

The catalysed reaction is keto-D-fructose + NADH + H(+) = D-sorbitol + NAD(+). The enzyme catalyses xylitol + NAD(+) = D-xylulose + NADH + H(+). In terms of biological role, polyol dehydrogenase that catalyzes the reversible NAD(+)-dependent oxidation of various sugar alcohols. Is active with D-sorbitol (D-glucitol) and xylitol as substrates, leading to the C2-oxidized product D-fructose and D-xylulose, respectively. This chain is Sorbitol dehydrogenase 2 (SOR2), found in Saccharomyces cerevisiae (strain ATCC 204508 / S288c) (Baker's yeast).